A 542-amino-acid chain; its full sequence is CTP synthase (542 aa).

An amidoligase domain region spans residues 1-266 (MATNYIFVTG…DEFVCNRFHL (266 aa)). S14 contacts CTP. S14 is a UTP binding site. ATP is bound by residues 15–20 (SLGKGI) and D72. Mg(2+)-binding residues include D72 and E140. CTP contacts are provided by residues 147 to 149 (DIE), 187 to 192 (KTKPTQ), and K223. UTP-binding positions include 187–192 (KTKPTQ) and K223. Residue 239-241 (KDV) participates in ATP binding. A Glutamine amidotransferase type-1 domain is found at 291 to 542 (TIGMVGKYVE…VKAAKENQKK (252 aa)). An L-glutamine-binding site is contributed by G352. The active-site Nucleophile; for glutamine hydrolysis is the C379. Residues 380–383 (LGMQ), E403, and R470 contribute to the L-glutamine site. Active-site residues include H515 and E517.

It belongs to the CTP synthase family. As to quaternary structure, homotetramer.

The enzyme catalyses UTP + L-glutamine + ATP + H2O = CTP + L-glutamate + ADP + phosphate + 2 H(+). It carries out the reaction L-glutamine + H2O = L-glutamate + NH4(+). It catalyses the reaction UTP + NH4(+) + ATP = CTP + ADP + phosphate + 2 H(+). The protein operates within pyrimidine metabolism; CTP biosynthesis via de novo pathway; CTP from UDP: step 2/2. With respect to regulation, allosterically activated by GTP, when glutamine is the substrate; GTP has no effect on the reaction when ammonia is the substrate. The allosteric effector GTP functions by stabilizing the protein conformation that binds the tetrahedral intermediate(s) formed during glutamine hydrolysis. Inhibited by the product CTP, via allosteric rather than competitive inhibition. In terms of biological role, catalyzes the ATP-dependent amination of UTP to CTP with either L-glutamine or ammonia as the source of nitrogen. Regulates intracellular CTP levels through interactions with the four ribonucleotide triphosphates. This chain is CTP synthase, found in Actinobacillus succinogenes (strain ATCC 55618 / DSM 22257 / CCUG 43843 / 130Z).